Consider the following 568-residue polypeptide: Calcium-dependent protein kinase 5 (568 aa).

Positions 125 to 379 (EIDRYKLGKG…VEQVLKHRWF (255 aa)) constitute a Protein kinase domain. Residues 131-139 (LGKGSYGNV) and Lys-154 each bind ATP. The active-site Proton acceptor is Asp-245. The J domain autoinhibitory motif signature appears at 400–408 (KFKEFHKLC). A j domain region spans residues 400–435 (KFKEFHKLCKIKKLAVTCIAYQLNEKDIGKLKKTFE). The short motif at 409–418 (KIKKLAVTCI) is the J domain EF-hand interaction motif element. EF-hand domains lie at 425 to 460 (KDIGKLKKTFEAFDHNGDGVLTISEIFQCLKVNDNE), 462 to 495 (DRELYFLLKQLDTDGNGLIDYTEFLAACLDHSIF), 496 to 531 (QQDVICRNAFNVFDLDGDGVITKDELFKILSFSAVQ), and 534 to 568 (FSKEIIENLIKEVDSNNDGFIDYDEFYKMMTGVKE). Ca(2+) is bound by residues Asp-438, Asn-440, Asp-442, Glu-449, Asp-473, Asp-475, Asn-477, Glu-484, Asp-509, Asp-511, Asp-513, Glu-520, Asp-547, Asn-549, Asp-551, and Glu-558.

The protein belongs to the protein kinase superfamily. Ser/Thr protein kinase family. CDPK subfamily. It depends on Mg(2+) as a cofactor. May be palmitoylated. Post-translationally, autophosphorylated in vitro.

Its subcellular location is the cytoplasm. It localises to the cytoplasmic vesicle. It is found in the secretory vesicle. The protein localises to the microneme membrane. The protein resides in the cell membrane. The enzyme catalyses L-seryl-[protein] + ATP = O-phospho-L-seryl-[protein] + ADP + H(+). It carries out the reaction L-threonyl-[protein] + ATP = O-phospho-L-threonyl-[protein] + ADP + H(+). With respect to regulation, activated by calcium. Upon calcium binding to the EF-hand domains, the C-terminus of the junction domain (J domain) undergoes a conformational change which results in the dissociation of the pseudo-substrate inhibitory motif from the catalytic domain. This, in turn, may facilitate the autophosphorylation of the activation loop at Thr-285, which leads to the kinase activation. Functionally, calcium-dependent protein kinase which acts as a sensor and effector of intracellular Ca(2+) levels probably in part downstream of cGMP-activated PKG kinase. Plays a central role in host erythrocytes and hepatocytes infection cycles. During the liver stage, involved in sporozoite motility and thus in sporozoite invasion of host hepatocytes, probably together with CDPK1 and CDPK4. Involved in merosome egress from host hepatocytes, probably together with CDPK4. Required for the release of hepatic merozoites from merosomes in the host blood stream. During the asexual blood stage, required for merozoite egress from host erythrocytes by triggering microneme secretion. Phosphorylates transporter NPT1 at late schizont stage. The chain is Calcium-dependent protein kinase 5 from Plasmodium falciparum (isolate 3D7).